Consider the following 242-residue polypeptide: Type III pantothenate kinase (242 aa).

Position 6–13 (6–13) interacts with ATP; that stretch reads DIGNSVAK. Residues Tyr86 and 93–96 contribute to the substrate site; that span reads GMDR. The active-site Proton acceptor is Asp95. Asp116 contacts K(+). Residue Thr119 participates in ATP binding. A substrate-binding site is contributed by Thr171.

This sequence belongs to the type III pantothenate kinase family. In terms of assembly, homodimer. Requires NH4(+) as cofactor. The cofactor is K(+).

It localises to the cytoplasm. It carries out the reaction (R)-pantothenate + ATP = (R)-4'-phosphopantothenate + ADP + H(+). It participates in cofactor biosynthesis; coenzyme A biosynthesis; CoA from (R)-pantothenate: step 1/5. Its function is as follows. Catalyzes the phosphorylation of pantothenate (Pan), the first step in CoA biosynthesis. This chain is Type III pantothenate kinase, found in Phocaeicola vulgatus (strain ATCC 8482 / DSM 1447 / JCM 5826 / CCUG 4940 / NBRC 14291 / NCTC 11154) (Bacteroides vulgatus).